The chain runs to 28 residues: NU-theraphotoxin-Preg1a (28 aa).

3 disulfides stabilise this stretch: Cys2–Cys19, Cys9–Cys22, and Cys18–Cys27.

Expressed by the venom gland.

The protein localises to the secreted. Its function is as follows. Toxin that acts as an agonist on melanocortin receptors (MC1R, MC3R, MC5R, MC5R). After binding to MC1R, the peptide activates the hMC1R/Gs pathway, but after binding to MC4R, it is not able to activate or antagonize the MC4R/Gs pathway. Inhibits melanocyte stimulating hormone (MSH)-binding to human receptors (Ki=1.8 uM to MC1R, Ki=19.8 uM to MC3R, Ki=7.1 uM to MC4R, Ki=10.0 uM to MC5R). This toxin is structurally unrelated to the natural agonists. The chain is NU-theraphotoxin-Preg1a from Poecilotheria regalis (Indian ornamental tree spider).